Consider the following 268-residue polypeptide: MNNFLKVSLLAAAVAVSLTACQKDEKTAANTAEVKAEASKPAEAPKAEAKSFEEQSGYAIGLSMGRYIANTLERQQELGIKLDNSVILKGVTDGLGKEAKMTDEEIQKVLQQYDAKINELTKAKADKDAVENQKKGEEYLAANAKKEGVKSTESGLQYQVEKMGTGAKPKATDIVKVHYTGTLTDGTKFDSSVDRGEPATFPLNQVIPGWTEGVQLMPVGSKFKFFLPSKLAYGEHGAGSIPANAVLVFDVELLAIEKPAADGDNAKK.

A signal peptide spans methionine 1–alanine 20. Residues threonine 172 to glutamate 257 enclose the PPIase FKBP-type domain.

It belongs to the FKBP-type PPIase family.

It localises to the periplasm. The enzyme catalyses [protein]-peptidylproline (omega=180) = [protein]-peptidylproline (omega=0). Functionally, PPIases accelerate the folding of proteins. It catalyzes the cis-trans isomerization of proline imidic peptide bonds in oligopeptides. FkpA probably acts in the folding of extracytoplasmic proteins. The sequence is that of FKBP-type peptidyl-prolyl cis-trans isomerase FkpA (fkpA) from Aeromonas hydrophila.